The chain runs to 166 residues: Phosphopantetheine adenylyltransferase (166 aa).

Ser-9 contacts substrate. Residues 9-10 and His-17 each bind ATP; that span reads SY. Residues Lys-41, Ile-75, and Lys-89 each contribute to the substrate site. Residues 90–92, Glu-100, and 124–130 each bind ATP; these read GLR and LEHISSS.

This sequence belongs to the bacterial CoaD family. In terms of assembly, homohexamer. It depends on Mg(2+) as a cofactor.

It is found in the cytoplasm. The enzyme catalyses (R)-4'-phosphopantetheine + ATP + H(+) = 3'-dephospho-CoA + diphosphate. The protein operates within cofactor biosynthesis; coenzyme A biosynthesis; CoA from (R)-pantothenate: step 4/5. In terms of biological role, reversibly transfers an adenylyl group from ATP to 4'-phosphopantetheine, yielding dephospho-CoA (dPCoA) and pyrophosphate. This chain is Phosphopantetheine adenylyltransferase, found in Bifidobacterium longum (strain DJO10A).